A 109-amino-acid polypeptide reads, in one-letter code: Fluorescence recovery protein (109 aa).

Probably a dimer, interacts with the C-terminal domain of OCP-R.

The protein localises to the cellular thylakoid membrane. Destabilizes orange carotenoid protein-R form (OCP-R), the FRP-OCP interaction accelerates the OCP-R to OCP-O conversion. Increases fluorescence recovery following non-photochemical quenching (NPQ) by OCP, most probably by destabilizing OCP-R binding to the phycobilisome core. This is Fluorescence recovery protein (frp) from Synechocystis sp. (strain ATCC 27184 / PCC 6803 / Kazusa).